The sequence spans 323 residues: Putative dTDP-D-glucose 4,6-dehydratase (323 aa).

Threonine 124 is a substrate binding site. The Proton donor role is filled by aspartate 125. Active-site proton acceptor residues include glutamate 126 and tyrosine 149.

The protein belongs to the NAD(P)-dependent epimerase/dehydratase family. dTDP-glucose dehydratase subfamily. NAD(+) is required as a cofactor.

The catalysed reaction is dTDP-alpha-D-glucose = dTDP-4-dehydro-6-deoxy-alpha-D-glucose + H2O. The sequence is that of Putative dTDP-D-glucose 4,6-dehydratase from Acanthamoeba polyphaga mimivirus (APMV).